A 303-amino-acid polypeptide reads, in one-letter code: Imidazoleglycerol-phosphate dehydratase (303 aa).

It belongs to the imidazoleglycerol-phosphate dehydratase family.

It localises to the cytoplasm. The enzyme catalyses D-erythro-1-(imidazol-4-yl)glycerol 3-phosphate = 3-(imidazol-4-yl)-2-oxopropyl phosphate + H2O. Its pathway is amino-acid biosynthesis; L-histidine biosynthesis; L-histidine from 5-phospho-alpha-D-ribose 1-diphosphate: step 6/9. This Neisseria gonorrhoeae (strain ATCC 700825 / FA 1090) protein is Imidazoleglycerol-phosphate dehydratase.